The primary structure comprises 138 residues: NADPH-dependent 7-cyano-7-deazaguanine reductase (138 aa).

The active-site Thioimide intermediate is the C53. Residue D60 is the Proton donor of the active site. Substrate contacts are provided by residues 75 to 77 (VEL) and 94 to 95 (HE).

Belongs to the GTP cyclohydrolase I family. QueF type 1 subfamily.

Its subcellular location is the cytoplasm. The catalysed reaction is 7-aminomethyl-7-carbaguanine + 2 NADP(+) = 7-cyano-7-deazaguanine + 2 NADPH + 3 H(+). Its pathway is tRNA modification; tRNA-queuosine biosynthesis. Functionally, catalyzes the NADPH-dependent reduction of 7-cyano-7-deazaguanine (preQ0) to 7-aminomethyl-7-deazaguanine (preQ1). This is NADPH-dependent 7-cyano-7-deazaguanine reductase from Gloeothece citriformis (strain PCC 7424) (Cyanothece sp. (strain PCC 7424)).